The primary structure comprises 778 residues: NAD-dependent deacetylase sir2B (778 aa).

ANK repeat units lie at residues 83-112 (LNWT…EISI), 114-142 (RYTA…VPNG), 148-178 (DMET…SMNS), 191-221 (HGVS…DINS), 225-255 (DNST…ELMN), 260-289 (YGNS…KIII), 317-354 (DGST…QVNG), 358-390 (GNAT…DPTI), and 394-423 (YGWT…LTNS). The disordered stretch occupies residues 438–458 (SSTSTSSSSSSSSSSSSSSSS). The Deacetylase sirtuin-type domain maps to 465-778 (KEELKLKGIE…DYFNTLFNSF (314 aa)). The active-site Proton acceptor is H608. Residues C616, C619, C642, and C647 each contribute to the Zn(2+) site. Positions 727–746 (KLKQQQENESGESSNDNDNN) are disordered. Over residues 733–746 (ENESGESSNDNDNN) the composition is skewed to low complexity.

The protein belongs to the sirtuin family. It depends on Zn(2+) as a cofactor.

The catalysed reaction is N(6)-acetyl-L-lysyl-[protein] + NAD(+) + H2O = 2''-O-acetyl-ADP-D-ribose + nicotinamide + L-lysyl-[protein]. In terms of biological role, NAD-dependent deacetylase, which plays an important role in the regulation of transcriptional repression. In Dictyostelium discoideum (Social amoeba), this protein is NAD-dependent deacetylase sir2B (sir2B).